Here is a 206-residue protein sequence, read N- to C-terminus: Proteasome subunit beta 1 (206 aa).

Residues 1–5 (MLMKG) constitute a propeptide, removed in mature form; by autocatalysis. Threonine 6 (nucleophile) is an active-site residue.

The protein belongs to the peptidase T1B family. In terms of assembly, the 20S proteasome core is composed of 14 alpha and 14 beta subunits that assemble into four stacked heptameric rings, resulting in a barrel-shaped structure. The two inner rings, each composed of seven catalytic beta subunits, are sandwiched by two outer rings, each composed of seven alpha subunits. The catalytic chamber with the active sites is on the inside of the barrel. Has a gated structure, the ends of the cylinder being occluded by the N-termini of the alpha-subunits. Is capped at one or both ends by the proteasome regulatory ATPase, PAN.

It is found in the cytoplasm. The enzyme catalyses Cleavage of peptide bonds with very broad specificity.. The formation of the proteasomal ATPase PAN-20S proteasome complex, via the docking of the C-termini of PAN into the intersubunit pockets in the alpha-rings, triggers opening of the gate for substrate entry. Interconversion between the open-gate and close-gate conformations leads to a dynamic regulation of the 20S proteasome proteolysis activity. Its function is as follows. Component of the proteasome core, a large protease complex with broad specificity involved in protein degradation. This is Proteasome subunit beta 1 from Korarchaeum cryptofilum (strain OPF8).